Here is a 318-residue protein sequence, read N- to C-terminus: Protoheme IX farnesyltransferase (318 aa).

The next 9 membrane-spanning stretches (helical) occupy residues 37-57 (LVIFTALVGIAVAPGGIHPVI), 58-78 (AFTALLCIAVGAGASGALNMW), 100-120 (VTAREAAVFGSILSVFAVMTM), 122-142 (VLVNWVAAALLAFTIFFYLVV), 155-175 (IVIGGAAGAFPPMIGWAAVTG), 182-202 (FVLFLIIFMWTPPHFWALALY), 228-248 (IMLYSLALVPVTLLPGFLGFA), 251-271 (LYMGATAALGAGFLWLAFGIW), and 291-311 (ILYLFLIFSLLLVEKMLGLGG).

The protein belongs to the UbiA prenyltransferase family. Protoheme IX farnesyltransferase subfamily.

The protein resides in the cell inner membrane. The enzyme catalyses heme b + (2E,6E)-farnesyl diphosphate + H2O = Fe(II)-heme o + diphosphate. It participates in porphyrin-containing compound metabolism; heme O biosynthesis; heme O from protoheme: step 1/1. Functionally, converts heme B (protoheme IX) to heme O by substitution of the vinyl group on carbon 2 of heme B porphyrin ring with a hydroxyethyl farnesyl side group. The protein is Protoheme IX farnesyltransferase of Parvibaculum lavamentivorans (strain DS-1 / DSM 13023 / NCIMB 13966).